The chain runs to 144 residues: Large ribosomal subunit protein uL16 (144 aa).

The protein belongs to the universal ribosomal protein uL16 family. In terms of assembly, part of the 50S ribosomal subunit.

Functionally, binds 23S rRNA and is also seen to make contacts with the A and possibly P site tRNAs. This chain is Large ribosomal subunit protein uL16, found in Latilactobacillus sakei subsp. sakei (strain 23K) (Lactobacillus sakei subsp. sakei).